A 219-amino-acid chain; its full sequence is 2-phospho-L-lactate guanylyltransferase (219 aa).

This sequence belongs to the CofC family. In terms of assembly, homodimer.

The catalysed reaction is (2S)-2-phospholactate + GTP + H(+) = (2S)-lactyl-2-diphospho-5'-guanosine + diphosphate. Its pathway is cofactor biosynthesis; coenzyme F420 biosynthesis. Guanylyltransferase that catalyzes the activation of (2S)-2-phospholactate (2-PL) as (2S)-lactyl-2-diphospho-5'-guanosine, via the condensation of 2-PL with GTP. It is involved in the biosynthesis of coenzyme F420, a hydride carrier cofactor. This is 2-phospho-L-lactate guanylyltransferase from Methanocella arvoryzae (strain DSM 22066 / NBRC 105507 / MRE50).